Here is a 516-residue protein sequence, read N- to C-terminus: Protein DML1 (516 aa).

The protein belongs to the misato family.

It localises to the mitochondrion. Functionally, involved in the partitioning of the mitochondrial organelle and mitochondrial DNA (mtDNA) inheritance. The polypeptide is Protein DML1 (DML1) (Coccidioides immitis (strain RS) (Valley fever fungus)).